The following is a 473-amino-acid chain: Cysteine--tRNA ligase (473 aa).

Residue Cys-30 coordinates Zn(2+). Residues 32 to 42 carry the 'HIGH' region motif; that stretch reads MTVYDYCHIGH. Zn(2+) is bound by residues Cys-213, His-238, and Glu-242. The 'KMSKS' region signature appears at 270–274; that stretch reads KMSKS. Position 273 (Lys-273) interacts with ATP.

Belongs to the class-I aminoacyl-tRNA synthetase family. In terms of assembly, monomer. It depends on Zn(2+) as a cofactor.

It is found in the cytoplasm. The enzyme catalyses tRNA(Cys) + L-cysteine + ATP = L-cysteinyl-tRNA(Cys) + AMP + diphosphate. In Acinetobacter baumannii (strain SDF), this protein is Cysteine--tRNA ligase.